The following is a 253-amino-acid chain: Aspartate/glutamate leucyltransferase (253 aa).

Belongs to the R-transferase family. Bpt subfamily.

It localises to the cytoplasm. It catalyses the reaction N-terminal L-glutamyl-[protein] + L-leucyl-tRNA(Leu) = N-terminal L-leucyl-L-glutamyl-[protein] + tRNA(Leu) + H(+). The enzyme catalyses N-terminal L-aspartyl-[protein] + L-leucyl-tRNA(Leu) = N-terminal L-leucyl-L-aspartyl-[protein] + tRNA(Leu) + H(+). Its function is as follows. Functions in the N-end rule pathway of protein degradation where it conjugates Leu from its aminoacyl-tRNA to the N-termini of proteins containing an N-terminal aspartate or glutamate. This Allorhizobium ampelinum (strain ATCC BAA-846 / DSM 112012 / S4) (Agrobacterium vitis (strain S4)) protein is Aspartate/glutamate leucyltransferase.